Consider the following 291-residue polypeptide: Ribosomal RNA small subunit methyltransferase A (291 aa).

6 residues coordinate S-adenosyl-L-methionine: histidine 37, leucine 39, glycine 64, glutamate 85, aspartate 110, and asparagine 131.

This sequence belongs to the class I-like SAM-binding methyltransferase superfamily. rRNA adenine N(6)-methyltransferase family. RsmA subfamily.

The protein resides in the cytoplasm. The catalysed reaction is adenosine(1518)/adenosine(1519) in 16S rRNA + 4 S-adenosyl-L-methionine = N(6)-dimethyladenosine(1518)/N(6)-dimethyladenosine(1519) in 16S rRNA + 4 S-adenosyl-L-homocysteine + 4 H(+). Specifically dimethylates two adjacent adenosines (A1518 and A1519) in the loop of a conserved hairpin near the 3'-end of 16S rRNA in the 30S particle. May play a critical role in biogenesis of 30S subunits. This Dehalococcoides mccartyi (strain CBDB1) protein is Ribosomal RNA small subunit methyltransferase A.